The chain runs to 351 residues: Silk gland factor 3 (351 aa).

2 disordered regions span residues 61–88 (ADPW…HDHR) and 131–154 (SSPR…TPTS). A compositionally biased stretch (basic and acidic residues) spans 135–145 (DPLHHHAMERD). Positions 149–223 (EDTPTSDDLE…LLQKWLEEAD (75 aa)) constitute a POU-specific domain. Residues 241-300 (KRKKRTSIEVSVKGALEQHFHKQPKPSAQEITSLADSLQLEKEVVRVWFCNRRQKEKRMT) constitute a DNA-binding region (homeobox). A disordered region spans residues 314–351 (GHAHYGHGDVHGSPLQHSPPGLSPQHGLPQGAHTLAAH).

This sequence belongs to the POU transcription factor family. Class-3 subfamily. In terms of tissue distribution, restricted to the middle silk gland.

It is found in the nucleus. Involved in the transcriptional regulation of sericin-1 gene. This Bombyx mori (Silk moth) protein is Silk gland factor 3 (SGF3).